The chain runs to 743 residues: Putative cation exchanger C3A12.06c (743 aa).

The next 13 helical transmembrane spans lie at 13–33 (LILLWCILGIAYILFWTHRIS), 109–129 (FPVLSIIVGWLIFLFITIGIS), 138–158 (LVTISWLLQLPDSVVGVTFLA), 182–202 (IGELLGSAFFIVAIVAGSVCL), 213–233 (FLRDVAFLTGTILLVIMFVLH), 239–258 (IWQSLVMILYYLLYVLFVFF), 528–548 (LRLLQCVFVPFAFVTFSITGG), 551–571 (LYIYAASSVFSILCITALYYY), 580–600 (FLPWVSFIGFVLGIIWISTIA), 609–629 (ALGVIFNLNESILGLTVFAAG), 649–669 (MAMGGVFGGPTLNILIGIGIS), 690–710 (LSITAYFLLACLLLLLIYVPL), and 718–738 (VLGLLLFILYIVGTSTNIVVE).

This sequence belongs to the Ca(2+):cation antiporter (CaCA) (TC 2.A.19) family.

It is found in the endoplasmic reticulum membrane. Its function is as follows. Putative cation exchanger. The protein is Putative cation exchanger C3A12.06c of Schizosaccharomyces pombe (strain 972 / ATCC 24843) (Fission yeast).